The sequence spans 172 residues: Adenine phosphoribosyltransferase (172 aa).

The protein belongs to the purine/pyrimidine phosphoribosyltransferase family. In terms of assembly, homodimer.

Its subcellular location is the cytoplasm. It catalyses the reaction AMP + diphosphate = 5-phospho-alpha-D-ribose 1-diphosphate + adenine. It participates in purine metabolism; AMP biosynthesis via salvage pathway; AMP from adenine: step 1/1. Catalyzes a salvage reaction resulting in the formation of AMP, that is energically less costly than de novo synthesis. This is Adenine phosphoribosyltransferase from Malacoplasma penetrans (strain HF-2) (Mycoplasma penetrans).